Here is a 688-residue protein sequence, read N- to C-terminus: Elongation factor G (688 aa).

Residues 6-280 form the tr-type G domain; it reads KLFRNFGIMA…AVVDFLPSPI (275 aa). GTP-binding positions include 15–22, 79–83, and 133–136; these read AHIDAGKT, DTPGH, and NKMD.

It belongs to the TRAFAC class translation factor GTPase superfamily. Classic translation factor GTPase family. EF-G/EF-2 subfamily.

The protein resides in the cytoplasm. In terms of biological role, catalyzes the GTP-dependent ribosomal translocation step during translation elongation. During this step, the ribosome changes from the pre-translocational (PRE) to the post-translocational (POST) state as the newly formed A-site-bound peptidyl-tRNA and P-site-bound deacylated tRNA move to the P and E sites, respectively. Catalyzes the coordinated movement of the two tRNA molecules, the mRNA and conformational changes in the ribosome. In Ureaplasma urealyticum serovar 10 (strain ATCC 33699 / Western), this protein is Elongation factor G.